Here is a 147-residue protein sequence, read N- to C-terminus: Lysozyme C, tracheal isozyme (147 aa).

The signal sequence occupies residues 1-18 (MKALLILGLLLLSVAVQG). Positions 19 to 147 (KTFKRCELAK…LTSYVKGCGV (129 aa)) constitute a C-type lysozyme domain. Intrachain disulfides connect Cys-24–Cys-145, Cys-48–Cys-133, Cys-83–Cys-99, and Cys-95–Cys-113. Residues Glu-53 and Asp-71 contribute to the active site.

This sequence belongs to the glycosyl hydrolase 22 family. As to quaternary structure, monomer. As to expression, trachea.

The enzyme catalyses Hydrolysis of (1-&gt;4)-beta-linkages between N-acetylmuramic acid and N-acetyl-D-glucosamine residues in a peptidoglycan and between N-acetyl-D-glucosamine residues in chitodextrins.. Lysozymes have primarily a bacteriolytic function; those in tissues and body fluids are associated with the monocyte-macrophage system and enhance the activity of immunoagents. The polypeptide is Lysozyme C, tracheal isozyme (Bos taurus (Bovine)).